Reading from the N-terminus, the 44-residue chain is Antimicrobial peptide 1b (44 aa).

The Chitin-binding type-1 domain maps to 1–42 (AQKCGEQGRGAKCPNCLCCGRYGFCGSTPDYCGVGCQSQCRG). 5 cysteine pairs are disulfide-bonded: Cys4/Cys19, Cys13/Cys25, Cys16/Cys43, Cys18/Cys32, and Cys36/Cys40.

Contains 5 disulfide bonds.

Binds chitin. Has antifungal activity against F.oxysporum 16/10 (IC(50)=4.1 uM) and B.sorokiniana 6/10 (IC(50)=2.7 uM). Inhibits germination of fungal spores. In Leymus arenarius (Lyme grass), this protein is Antimicrobial peptide 1b.